Here is a 542-residue protein sequence, read N- to C-terminus: CTP synthase (542 aa).

An amidoligase domain region spans residues 1 to 265 (MARYIFITGG…DDEVLAAFGL (265 aa)). Residue Ser13 participates in CTP binding. Ser13 provides a ligand contact to UTP. Position 14–19 (14–19 (SLGKGL)) interacts with ATP. L-glutamine is bound at residue Tyr54. Asp71 contacts ATP. Residues Asp71 and Glu139 each coordinate Mg(2+). Residues 146–148 (DIE), 186–191 (KTKPTQ), and Lys222 each bind CTP. UTP is bound by residues 186 to 191 (KTKPTQ) and Lys222. Residue 238–240 (RDA) participates in ATP binding. Residues 290–541 (TIAIVGKYTG…IQAAVVQSRL (252 aa)) enclose the Glutamine amidotransferase type-1 domain. Gly352 lines the L-glutamine pocket. Catalysis depends on Cys379, which acts as the Nucleophile; for glutamine hydrolysis. Residues 380 to 383 (FGMQ), Glu403, and Arg469 each bind L-glutamine. Residues His514 and Glu516 contribute to the active site.

It belongs to the CTP synthase family. As to quaternary structure, homotetramer.

It catalyses the reaction UTP + L-glutamine + ATP + H2O = CTP + L-glutamate + ADP + phosphate + 2 H(+). The enzyme catalyses L-glutamine + H2O = L-glutamate + NH4(+). The catalysed reaction is UTP + NH4(+) + ATP = CTP + ADP + phosphate + 2 H(+). Its pathway is pyrimidine metabolism; CTP biosynthesis via de novo pathway; CTP from UDP: step 2/2. With respect to regulation, allosterically activated by GTP, when glutamine is the substrate; GTP has no effect on the reaction when ammonia is the substrate. The allosteric effector GTP functions by stabilizing the protein conformation that binds the tetrahedral intermediate(s) formed during glutamine hydrolysis. Inhibited by the product CTP, via allosteric rather than competitive inhibition. Catalyzes the ATP-dependent amination of UTP to CTP with either L-glutamine or ammonia as the source of nitrogen. Regulates intracellular CTP levels through interactions with the four ribonucleotide triphosphates. In Nitrobacter hamburgensis (strain DSM 10229 / NCIMB 13809 / X14), this protein is CTP synthase.